The primary structure comprises 173 residues: Alpha-crystallin A chain (173 aa).

Met-1 bears the N-acetylmethionine mark. The required for complex formation with BFSP1 and BFSP2 stretch occupies residues 1–63 (MDIAIQHPWF…RTVLDSGISE (63 aa)). Gln-6 bears the Deamidated glutamine; partial mark. Ser-45 is modified (phosphoserine). Residue Gln-50 is modified to Deamidated glutamine; partial. Residues 52-162 (LFRTVLDSGI…GHSERAIPVS (111 aa)) form the sHSP domain. Lys-70 bears the N6-acetyllysine mark. At Gln-90 the chain carries Deamidated glutamine; partial. Lys-99 is subject to N6-acetyllysine. His-100 contacts Zn(2+). Residue Asn-101 is modified to Deamidated asparagine; partial. Zn(2+) contacts are provided by Glu-102 and His-107. Ser-122 carries the phosphoserine modification. Residue Asn-123 is modified to Deamidated asparagine; partial. Residues 144-173 (PKVPSGLDAGHSERAIPVSREEKPSSAPSS) form a disordered region. Residues 153–167 (GHSERAIPVSREEKP) are compositionally biased toward basic and acidic residues. His-154 provides a ligand contact to Zn(2+). An O-linked (GlcNAc) serine glycan is attached at Ser-162.

The protein belongs to the small heat shock protein (HSP20) family. Heteromer composed of three CRYAA and one CRYAB subunits. Inter-subunit bridging via zinc ions enhances stability, which is crucial as there is no protein turn over in the lens. Can also form homodimers and homotetramers (dimers of dimers) which serve as the building blocks of homooligomers. Within homooligomers, the zinc-binding motif is created from residues of 3 different molecules. His-100 and Glu-102 from one molecule are ligands of the zinc ion, and His-107 and His-154 residues from additional molecules complete the site with tetrahedral coordination geometry. Part of a complex required for lens intermediate filament formation composed of BFSP1, BFSP2 and CRYAA. Post-translationally, acetylation at Lys-70 may increase chaperone activity. In terms of processing, undergoes age-dependent proteolytical cleavage at the C-terminus.

It is found in the cytoplasm. The protein localises to the nucleus. Its function is as follows. Contributes to the transparency and refractive index of the lens. Acts as a chaperone, preventing aggregation of various proteins under a wide range of stress conditions. Required for the correct formation of lens intermediate filaments as part of a complex composed of BFSP1, BFSP2 and CRYAA. The protein is Alpha-crystallin A chain (CRYAA) of Tapirus indicus (Asiatic tapir).